The primary structure comprises 199 residues: Peroxiredoxin 2 (199 aa).

Residues 1–152 enclose the Thioredoxin domain; it reads MGQKAPDFTV…IIRVIKALQF (152 aa). C40 acts as the Cysteine sulfenic acid (-SOH) intermediate in catalysis. R115 is a binding site for substrate.

Belongs to the peroxiredoxin family. Prx6 subfamily. In terms of assembly, homodecamer. Pentamer of dimers that assemble into a ring structure.

Its subcellular location is the cytoplasm. The enzyme catalyses a hydroperoxide + [thioredoxin]-dithiol = an alcohol + [thioredoxin]-disulfide + H2O. Its function is as follows. Thiol-specific peroxidase that catalyzes the reduction of hydrogen peroxide and organic hydroperoxides to water and alcohols, respectively. Plays a role in cell protection against oxidative stress by detoxifying peroxides. In Thermoplasma acidophilum (strain ATCC 25905 / DSM 1728 / JCM 9062 / NBRC 15155 / AMRC-C165), this protein is Peroxiredoxin 2.